Consider the following 768-residue polypeptide: DNA replication licensing factor MCM3 homolog 2 (768 aa).

The MCM domain occupies 290–497; the sequence is TFDLLGNSLA…IDRQISEHVA (208 aa). 340–347 is an ATP binding site; it reads GDPSVAKS. Positions 472–475 match the Arginine finger motif; that stretch reads SRFD. Residues 661–670 show a composition bias toward basic and acidic residues; sequence EMKQQADHDA. The segment at 661-689 is disordered; sequence EMKQQADHDAGATGGTVDGHGSSGNDPMD. Residues 672–682 show a composition bias toward gly residues; that stretch reads ATGGTVDGHGS.

Belongs to the MCM family.

The protein resides in the nucleus. The enzyme catalyses ATP + H2O = ADP + phosphate + H(+). Its function is as follows. Acts as a factor that allows the DNA to undergo a single round of replication per cell cycle. Required for DNA replication and cell proliferation. May act as a component of the MCM complex which is the putative replicative helicase of the replication licensing system in eukaryotic cells. This Zea mays (Maize) protein is DNA replication licensing factor MCM3 homolog 2 (ROA2).